A 90-amino-acid chain; its full sequence is Small ribosomal subunit protein bS18A (90 aa).

This sequence belongs to the bacterial ribosomal protein bS18 family. As to quaternary structure, part of the 30S ribosomal subunit. Forms a tight heterodimer with protein bS6.

Its function is as follows. Binds as a heterodimer with protein bS6 to the central domain of the 16S rRNA, where it helps stabilize the platform of the 30S subunit. The polypeptide is Small ribosomal subunit protein bS18A (Roseiflexus castenholzii (strain DSM 13941 / HLO8)).